The following is a 432-amino-acid chain: MSDKLPYKVADISLAAWGRKALDLAENEMPGLMHMREMYSASKPLKGARIAGCLHMTVETAVLIETLVALGAEVRWSSCNIFSTQDHAAAAIAKAGIPVYAWKGETDEEYLWCIEQTLYFKDGPLNMILDDGGDLTNLIHTKYPQLLSGIRGISEETTTGVHNLYKMMAKGILKVPAINVNDSVTKSKFDNLYGCRESLIDGIKRATDVMIAGKVAVVAGYGDVGKGCAQALRGFGARVIITEIDPINALQAAMEGYEVTTMDEACQEGNIFVTTTGCTDIILGQHFEQMKDDAIVCNIGHFDVEIDVKWLNENAVEKVNIKPQVDRYLLKNGRRIILLAEGRLVNLGCAMGHPSFVMSNSFTNQVLAQIELWTHPDKYPVGVHFLPKKLDEAVAEAHLGKLNVKLTKLTEKQAQYLGVSREGPFKPDHYRY.

Serine 2 carries the post-translational modification N-acetylserine. Threonine 57, aspartate 131, and glutamate 156 together coordinate substrate. Serine 183 is modified (phosphoserine). The segment at serine 183–alanine 350 is NAD binding. Positions 186 and 190 each coordinate substrate. Lysine 186 is modified (N6-(2-hydroxyisobutyryl)lysine). The residue at position 193 (tyrosine 193) is a Phosphotyrosine.

The protein belongs to the adenosylhomocysteinase family. Homotetramer. Interaction with AHCYL1. NAD(+) is required as a cofactor.

The protein localises to the cytoplasm. It is found in the melanosome. Its subcellular location is the nucleus. It localises to the endoplasmic reticulum. The enzyme catalyses S-adenosyl-L-homocysteine + H2O = L-homocysteine + adenosine. It participates in amino-acid biosynthesis; L-homocysteine biosynthesis; L-homocysteine from S-adenosyl-L-homocysteine: step 1/1. Catalyzes the hydrolysis of S-adenosyl-L-homocysteine to form adenosine and homocysteine. Binds copper ions. The protein is Adenosylhomocysteinase (AHCY) of Bos taurus (Bovine).